The chain runs to 134 residues: Large ribosomal subunit protein uL22 (134 aa).

Belongs to the universal ribosomal protein uL22 family. As to quaternary structure, part of the 50S ribosomal subunit. Contacts protein L32.

Its function is as follows. This protein binds specifically to 23S rRNA; its binding is stimulated by other ribosomal proteins, e.g. L4, L17, and L20. It is important during the early stages of 50S assembly. It makes multiple contacts with different domains of the 23S rRNA in the assembled 50S subunit and ribosome. The globular domain of the protein is located by the polypeptide exit tunnel on the outside of the subunit while an extended beta-hairpin forms part of the wall of the tunnel. Forms a pair of 'tweezers' with L32 that hold together two different domains of the 23S rRNA. Interacts with the tunnel-blocking modified macrolide azithromycin. Upon binding of the macrolide troleadomycin to the ribosome, the tip of the beta-hairpin is displaced, which severely restricts the tunnel. This and experiments in E.coli have led to the suggestion that it is part of the gating mechanism involved in translation arrest in the absence of the protein export system. The protein is Large ribosomal subunit protein uL22 (rplV) of Deinococcus radiodurans (strain ATCC 13939 / DSM 20539 / JCM 16871 / CCUG 27074 / LMG 4051 / NBRC 15346 / NCIMB 9279 / VKM B-1422 / R1).